The sequence spans 459 residues: MLREYKTVREIVGPLMLVEKVEGVKYNELVEIETGTGEIRRGQVLEVNGDKALVQLFEGSTGLNINDCKVRFVGKSIELGVSIDMLGRVFDGLGRPRDKGPMIIPEKRLDINGNPINPTARDYPSEFIQTGISAIDGLNTLVRGQKLPIFSGSGLPHAQLAAQIARQAKVLGSDSKFAVVFAAMGITFEEADYFISDFRRTGAIDRSVLFINLANDPAIERIATPRMALTCAEFLAYEKEMHVLVIMTDMTNYCEALREVSAARKEVPGRRGYPGYLYTDLATIYERAGRIKGRKGSITQIPILTMPEDDKTHPIPDLTGYITEGQIILSRDLYRKGIYPPIDVLPSLSRLKDKGIGQGKTREDHADLMNQLFASYARGKQAKELAVILGEAALSDTDKLYAKFADEFEARYVAQREDEDRSIEETLAIGWDLLTILPRAELKRVRDEYIDKYLPEKGE.

The protein belongs to the ATPase alpha/beta chains family.

Produces ATP from ADP in the presence of a proton gradient across the membrane. The V-type beta chain is a regulatory subunit. This chain is V-type ATP synthase beta chain, found in Thermoanaerobacter pseudethanolicus (strain ATCC 33223 / 39E) (Clostridium thermohydrosulfuricum).